A 166-amino-acid chain; its full sequence is Interferon gamma (166 aa).

An N-terminal signal peptide occupies residues 1–23; it reads MKYTSYFLALLLCVLLGFSGSYG. Position 24 is a pyrrolidone carboxylic acid (Gln-24). Residues Asn-39 and Asn-106 are each glycosylated (N-linked (GlcNAc...) asparagine).

The protein belongs to the type II (or gamma) interferon family. As to quaternary structure, homodimer. Interacts with IFNGR1 (via extracellular domain); this interaction promotes IFNGR1 dimerization. Released primarily from activated T lymphocytes.

The protein localises to the secreted. In terms of biological role, type II interferon produced by immune cells such as T-cells and NK cells that plays crucial roles in antimicrobial, antiviral, and antitumor responses by activating effector immune cells and enhancing antigen presentation. Primarily signals through the JAK-STAT pathway after interaction with its receptor IFNGR1 to affect gene regulation. Upon IFNG binding, IFNGR1 intracellular domain opens out to allow association of downstream signaling components JAK2, JAK1 and STAT1, leading to STAT1 activation, nuclear translocation and transcription of IFNG-regulated genes. Many of the induced genes are transcription factors such as IRF1 that are able to further drive regulation of a next wave of transcription. Plays a role in class I antigen presentation pathway by inducing a replacement of catalytic proteasome subunits with immunoproteasome subunits. In turn, increases the quantity, quality, and repertoire of peptides for class I MHC loading. Increases the efficiency of peptide generation also by inducing the expression of activator PA28 that associates with the proteasome and alters its proteolytic cleavage preference. Up-regulates as well MHC II complexes on the cell surface by promoting expression of several key molecules such as cathepsins B/CTSB, H/CTSH, and L/CTSL. Participates in the regulation of hematopoietic stem cells during development and under homeostatic conditions by affecting their development, quiescence, and differentiation. This chain is Interferon gamma (IFNG), found in Bubalus bubalis (Domestic water buffalo).